Reading from the N-terminus, the 123-residue chain is Ribosome-binding factor A (123 aa).

Belongs to the RbfA family. As to quaternary structure, monomer. Binds 30S ribosomal subunits, but not 50S ribosomal subunits or 70S ribosomes.

Its subcellular location is the cytoplasm. In terms of biological role, one of several proteins that assist in the late maturation steps of the functional core of the 30S ribosomal subunit. Associates with free 30S ribosomal subunits (but not with 30S subunits that are part of 70S ribosomes or polysomes). Required for efficient processing of 16S rRNA. May interact with the 5'-terminal helix region of 16S rRNA. This Chlamydia trachomatis serovar L2 (strain ATCC VR-902B / DSM 19102 / 434/Bu) protein is Ribosome-binding factor A.